We begin with the raw amino-acid sequence, 956 residues long: MDLIAGESSKVLRKQGFRSLKLMSVDMEQELGNELEPFGADYGRLDNGLIYYVRRNSKPRMRAALALAVKVGSVLEEEDQRGVAHIVEHLAFSATTRYTNHDIVKFLESIGAEFGPCQNAMTTADETIYELFVPVDKPELLSQAISILAEFSSEIRVSKEDLEKERGAVMEEYRGNRNATGRMQDSHWQLMMEGSKYAERLPIGLEKVIRSVPAATVKQFYQKWYHLCNMAVVAVGDFPDTKTVVDLIKTHFEDKRSSSEPPQIPVFPVPSHEETRFSCFVESEAAGSAVMISYKMPVSDLKTVKDYRDMLAESMFLHALNQRLFKISRRKDPPFFACSVAADVLVARVRLHGFSEREISVVRALMMSEIESAYLERDQVQSTSLRDEYIQHFLHKEPVIGIEYEAQLQKTLLPQISASDVSRYSEKLRTSCGCVIKSMEPKSAATIDHMRNVVSKVNSLEEEKMIAPWDEENIPEEIVSEKPTPGDITHQLEYPEVGVTELTLSNGMQVCYKSTDFLDDQVLFTGFSYGGLSELPESDYISCSMGSTIAGEIGMFGYKPSVLMDMLADLETALQLVYQLFTTNVMPQEEEVGIVMQMAEESVRARERDPYTVFANRVKELNYGNSYFFRPIRISELRKVDPLKACEYFNSCFRDPSTFTVVIVGNLDPTIALPLILQYLGGIPKPPQPVLNFNRDDLKGLPFTFPTKITKEFVRSPMVEAQCSVQLCFPVQLTNGTMIEEIHCIGFLGKLLETKIIQFLRFEHGQIYSAEVSVFLGGNKPSRTADLRGDISVNFSCDPEISSKLVDLALEEIVRLQKEGPSQEDISAILEIEQRAHENGMQENYYWLDRIIRGYQSRVYAGDLGASCKILEEGRLRMRESLAPQTAQAALQRILPHPCKKQYTAVILMPQRSRFGFLSSIFSSRSEGPYIRDTKILAGIAGLGVVVFGIWRYSRK.

Position 1 is an N-acetylmethionine (Met1). His85 contacts Zn(2+). Glu88 serves as the catalytic Proton acceptor. His89 serves as a coordination point for Zn(2+). Glu165 is an active-site residue. Glu172 is a binding site for Zn(2+).

It belongs to the peptidase M16 family. Zn(2+) is required as a cofactor.

This is Zinc protease PQQL-like from Arabidopsis thaliana (Mouse-ear cress).